A 373-amino-acid polypeptide reads, in one-letter code: Ferroptosis suppressor protein 1 (373 aa).

Residue glycine 2 is the site of N-myristoyl glycine attachment. A helical membrane pass occupies residues 7–27 (VESGALHVVIVGGGFGGIAAA). Residues 18–22 (GGGFG), arginine 54, and valine 82 contribute to the 6-hydroxy-FAD site. At lysine 168 the chain carries N6-acetyllysine; by KAT2B. Residue aspartate 285 participates in 6-hydroxy-FAD binding.

The protein belongs to the FAD-dependent oxidoreductase family. As to quaternary structure, interacts with importin subunits KPNA2 and IPO5; this interaction likely mediates the translocation into the nucleus upon oxidative stress. Requires 6-hydroxy-FAD as cofactor. Post-translationally, N-myristoylation at Gly-2 mediates the recruitment to lipid droplets and plasma membrane, enabling its anti-lipid peroxidation activity. In terms of processing, acetylation at Lys-168 prevents AIFM2 ubiquitination and degradation, thereby inhibiting ferroptosis. KAT2B mediates acetylation at Lys-168, while HDAC3 removes it. Ubiquitinated. AIFM2 undergoes 'Lys-29'-ubiquitination and proteasomal degradation, which is inhibited by acetylation at Lys-168. In terms of tissue distribution, detected in most normal tissues as two transcripts of 1.8 and 4.0 kb in length, respectively. Highly expressed in heart, moderately in liver and skeletal muscles, and expressed at low levels in placenta, lung, kidney, and pancreas. Both transcripts expressed following p53/TP53 induction. The shorter 1.8 kb transcript seems to be the major transcript in EB1 colon cancer cells.

Its subcellular location is the lipid droplet. It is found in the cell membrane. It localises to the cytoplasm. The protein localises to the mitochondrion membrane. The protein resides in the nucleus. It carries out the reaction ubiquinone-10 + NADH + H(+) = ubiquinol-10 + NAD(+). It catalyses the reaction phylloquinone + NADH + H(+) = phylloquinol + NAD(+). The enzyme catalyses menaquinone-4 + NADH + H(+) = menaquinol-4 + NAD(+). The catalysed reaction is menadione + NADH + H(+) = menadiol + NAD(+). With respect to regulation, the modification by 4-hydroxy-2-nonenal (HNE) adduction in mitochondria results in loss of the oxidoreductase activity and activation of a novel function in mitochondrial oxidative stress signaling. In terms of biological role, a NAD(P)H-dependent oxidoreductase that acts as a key inhibitor of ferroptosis. At the plasma membrane, catalyzes reduction of coenzyme Q/ubiquinone-10 to ubiquinol-10, a lipophilic radical-trapping antioxidant that prevents lipid oxidative damage and consequently ferroptosis. Acts in parallel to GPX4 to suppress phospholipid peroxidation and ferroptosis. This anti-ferroptotic function is independent of cellular glutathione levels. Also acts as a potent radical-trapping antioxidant by mediating warfarin-resistant vitamin K reduction in the canonical vitamin K cycle: catalyzes NAD(P)H-dependent reduction of vitamin K (phylloquinone, menaquinone-4 and menadione) to hydroquinone forms. Hydroquinones act as potent radical-trapping antioxidants inhibitor of phospholipid peroxidation and ferroptosis. May play a role in mitochondrial stress signaling. Upon oxidative stress, associates with the lipid peroxidation end product 4-hydroxy-2-nonenal (HNE) forming a lipid adduct devoid of oxidoreductase activity, which then translocates from mitochondria into the nucleus triggering DNA damage and cell death. Capable of DNA binding in a non-sequence specific way. This chain is Ferroptosis suppressor protein 1, found in Homo sapiens (Human).